The following is a 418-amino-acid chain: Alpha-tubulin N-acetyltransferase 1 (418 aa).

The N-acetyltransferase domain occupies 1-186 (MEFEFDVHKI…NNFVVFEGFF (186 aa)). Residues 120-133 (FYIH…GFGK) and 156-165 (SEKFLSFLRK) each bind acetyl-CoA. Disordered stretches follow at residues 237 to 292 (SSLG…MNLS) and 322 to 353 (QIKE…HQND). The span at 277–287 (QEDHSQRRRTS) shows a compositional bias: basic and acidic residues. Positions 329–353 (RTDSSAQEGRTQDRPNGSNSQHQND) are enriched in polar residues.

The protein belongs to the acetyltransferase ATAT1 family.

The protein localises to the cytoplasm. It is found in the membrane. The protein resides in the clathrin-coated pit. Its subcellular location is the cell junction. It localises to the focal adhesion. The protein localises to the cell projection. It is found in the axon. The protein resides in the cytoskeleton. Its subcellular location is the spindle. It carries out the reaction L-lysyl-[alpha-tubulin] + acetyl-CoA = N(6)-acetyl-L-lysyl-[alpha-tubulin] + CoA + H(+). Its function is as follows. Specifically acetylates 'Lys-40' in alpha-tubulin on the lumenal side of microtubules. Promotes microtubule destabilization and accelerates microtubule dynamics; this activity may be independent of acetylation activity. Acetylates alpha-tubulin with a slow enzymatic rate, due to a catalytic site that is not optimized for acetyl transfer. Enters the microtubule through each end and diffuses quickly throughout the lumen of microtubules. Acetylates only long/old microtubules because of its slow acetylation rate since it does not have time to act on dynamically unstable microtubules before the enzyme is released. May be involved in neuron development. The chain is Alpha-tubulin N-acetyltransferase 1 from Xenopus laevis (African clawed frog).